We begin with the raw amino-acid sequence, 371 residues long: Phospho-N-acetylmuramoyl-pentapeptide-transferase (371 aa).

9 helical membrane passes run 25–45, 77–94, 136–156, 172–192, 204–224, 240–260, 269–289, 296–316, and 348–368; these read TLLA…WLIA, MGGL…ALWA, IGWQ…HPAS, LIPH…IVGF, GLAI…AYVA, GTGE…AFLW, FMGD…AFMI, VIVG…VGVF, and KVVL…LATL.

The protein belongs to the glycosyltransferase 4 family. MraY subfamily. Mg(2+) serves as cofactor.

Its subcellular location is the cell inner membrane. It carries out the reaction UDP-N-acetyl-alpha-D-muramoyl-L-alanyl-gamma-D-glutamyl-meso-2,6-diaminopimeloyl-D-alanyl-D-alanine + di-trans,octa-cis-undecaprenyl phosphate = di-trans,octa-cis-undecaprenyl diphospho-N-acetyl-alpha-D-muramoyl-L-alanyl-D-glutamyl-meso-2,6-diaminopimeloyl-D-alanyl-D-alanine + UMP. It participates in cell wall biogenesis; peptidoglycan biosynthesis. Functionally, catalyzes the initial step of the lipid cycle reactions in the biosynthesis of the cell wall peptidoglycan: transfers peptidoglycan precursor phospho-MurNAc-pentapeptide from UDP-MurNAc-pentapeptide onto the lipid carrier undecaprenyl phosphate, yielding undecaprenyl-pyrophosphoryl-MurNAc-pentapeptide, known as lipid I. In Opitutus terrae (strain DSM 11246 / JCM 15787 / PB90-1), this protein is Phospho-N-acetylmuramoyl-pentapeptide-transferase.